A 159-amino-acid polypeptide reads, in one-letter code: Endoribonuclease YbeY (159 aa).

3 residues coordinate Zn(2+): His-125, His-129, and His-135.

This sequence belongs to the endoribonuclease YbeY family. Zn(2+) is required as a cofactor.

The protein resides in the cytoplasm. Its function is as follows. Single strand-specific metallo-endoribonuclease involved in late-stage 70S ribosome quality control and in maturation of the 3' terminus of the 16S rRNA. This chain is Endoribonuclease YbeY, found in Ligilactobacillus salivarius (strain UCC118) (Lactobacillus salivarius).